A 406-amino-acid polypeptide reads, in one-letter code: Tryptophan synthase beta chain (406 aa).

At Lys99 the chain carries N6-(pyridoxal phosphate)lysine.

The protein belongs to the TrpB family. As to quaternary structure, tetramer of two alpha and two beta chains. Requires pyridoxal 5'-phosphate as cofactor.

The catalysed reaction is (1S,2R)-1-C-(indol-3-yl)glycerol 3-phosphate + L-serine = D-glyceraldehyde 3-phosphate + L-tryptophan + H2O. The protein operates within amino-acid biosynthesis; L-tryptophan biosynthesis; L-tryptophan from chorismate: step 5/5. Functionally, the beta subunit is responsible for the synthesis of L-tryptophan from indole and L-serine. This Methylobacterium nodulans (strain LMG 21967 / CNCM I-2342 / ORS 2060) protein is Tryptophan synthase beta chain.